Here is a 624-residue protein sequence, read N- to C-terminus: Threonine--tRNA ligase (624 aa).

An editing domain region spans residues 1-143 (MRLLFIHADE…SRTVTPEAAE (143 aa)). The catalytic stretch occupies residues 197-499 (AHVKLMREKE…EQEGKLPTLP (303 aa)). Zn(2+) is bound by residues Cys289, His340, and His467. A disordered region spans residues 598 to 624 (LERETEGKPRVPLTIPDRLSRRPRFGR).

Belongs to the class-II aminoacyl-tRNA synthetase family. Homodimer. It depends on Zn(2+) as a cofactor.

Its subcellular location is the cytoplasm. The catalysed reaction is tRNA(Thr) + L-threonine + ATP = L-threonyl-tRNA(Thr) + AMP + diphosphate + H(+). Its function is as follows. Catalyzes the attachment of threonine to tRNA(Thr) in a two-step reaction: L-threonine is first activated by ATP to form Thr-AMP and then transferred to the acceptor end of tRNA(Thr). Also edits incorrectly charged L-seryl-tRNA(Thr). The protein is Threonine--tRNA ligase of Methanopyrus kandleri (strain AV19 / DSM 6324 / JCM 9639 / NBRC 100938).